The sequence spans 432 residues: uncharacterized protein (432 aa).

The region spanning 223-432 (ASAVRGEALF…KDLIEYLKTR (210 aa)) is the Cytochrome c domain. 3 residues coordinate heme c: Cys-236, Cys-239, and His-240.

This is an uncharacterized protein from Sinorhizobium fredii (strain NBRC 101917 / NGR234).